The primary structure comprises 163 residues: Protein-export protein SecB (163 aa).

The protein belongs to the SecB family. As to quaternary structure, homotetramer, a dimer of dimers. One homotetramer interacts with 1 SecA dimer.

The protein resides in the cytoplasm. One of the proteins required for the normal export of preproteins out of the cell cytoplasm. It is a molecular chaperone that binds to a subset of precursor proteins, maintaining them in a translocation-competent state. It also specifically binds to its receptor SecA. This chain is Protein-export protein SecB, found in Brucella anthropi (strain ATCC 49188 / DSM 6882 / CCUG 24695 / JCM 21032 / LMG 3331 / NBRC 15819 / NCTC 12168 / Alc 37) (Ochrobactrum anthropi).